A 407-amino-acid chain; its full sequence is Naringenin 8-dimethylallyltransferase 2, chloroplastic (407 aa).

The transit peptide at methionine 1–arginine 23 directs the protein to the chloroplast. 8 consecutive transmembrane segments (helical) span residues phenylalanine 117–alanine 137, serine 145–phenylalanine 165, isoleucine 206–isoleucine 226, valine 248–leucine 268, leucine 285–isoleucine 305, valine 328–alanine 348, isoleucine 352–tyrosine 372, and valine 383–isoleucine 403.

The protein belongs to the UbiA prenyltransferase family. Mg(2+) serves as cofactor. It depends on Mn(2+) as a cofactor.

The protein resides in the plastid. The protein localises to the chloroplast membrane. The enzyme catalyses (2S)-naringenin + dimethylallyl diphosphate = sophoraflavanone B + diphosphate. Functionally, involved in the biosynthesis of sophoraflavanone G (SFG). Can use flavanones (naringenin, liquiritigenin and hesperetin) as substrates, but not flavonols or isoflavones. Shows a strict specificity for dimethylallyl diphosphate. The sequence is that of Naringenin 8-dimethylallyltransferase 2, chloroplastic (N8DT-2) from Sophora flavescens (Shrubby sophora).